Here is a 211-residue protein sequence, read N- to C-terminus: Cytidylate kinase (211 aa).

7-15 (GPAASGKGT) provides a ligand contact to ATP.

The protein belongs to the cytidylate kinase family. Type 1 subfamily.

Its subcellular location is the cytoplasm. The enzyme catalyses CMP + ATP = CDP + ADP. It catalyses the reaction dCMP + ATP = dCDP + ADP. This Rhodopseudomonas palustris (strain BisA53) protein is Cytidylate kinase.